Here is a 52-residue protein sequence, read N- to C-terminus: Histone H2A (52 aa).

A disordered region spans residues 1 to 25; sequence MSGRGKTGGKARAKAKTRSSRAGLQ. Ser-2 carries the N-acetylserine modification. The residue at position 2 (Ser-2) is a Phosphoserine. Position 6 is an N6-(2-hydroxyisobutyryl)lysine (Lys-6). An N6-acetyllysine modification is found at Lys-6. The segment covering 7–19 has biased composition (basic residues); the sequence is TGGKARAKAKTRS. Lys-10 is subject to N6-(2-hydroxyisobutyryl)lysine; alternate. Position 10 is an N6-lactoyllysine; alternate (Lys-10). Residue Lys-10 is modified to N6-succinyllysine. Glycyl lysine isopeptide (Lys-Gly) (interchain with G-Cter in ubiquitin) cross-links involve residues Lys-14 and Lys-16. Lys-37 carries the post-translational modification N6-(2-hydroxyisobutyryl)lysine; alternate.

The nucleosome is a histone octamer containing two molecules each of H2A, H2B, H3 and H4 assembled in one H3-H4 heterotetramer and two H2A-H2B heterodimers. The octamer wraps approximately 147 bp of DNA. Post-translationally, acetylation is not necessary for the antibacterial activity. In terms of processing, monoubiquitination in C-terminus gives a specific tag for epigenetic transcriptional repression. Following DNA double-strand breaks (DSBs), it is ubiquitinated through 'Lys-63' linkage of ubiquitin moieties, leading to the recruitment of repair proteins to sites of DNA damage. H2AK119Ub and ionizing radiation-induced 'Lys-63'-linked ubiquitination are distinct events. Phosphorylation on Ser-2 is enhanced during mitosis. Phosphorylation on Ser-2 directly represses transcription.

Its subcellular location is the nucleus. It localises to the chromosome. It is found in the secreted. In terms of biological role, core component of nucleosome. Nucleosomes wrap and compact DNA into chromatin, limiting DNA accessibility to the cellular machineries which require DNA as a template. Histones thereby play a central role in transcription regulation, DNA repair, DNA replication and chromosomal stability. DNA accessibility is regulated via a complex set of post-translational modifications of histones, also called histone code, and nucleosome remodeling. Its function is as follows. Hipposin shows strong antimicrobial activity against several Gram-positive and Gram-negative bacteria. This Hippoglossus hippoglossus (Atlantic halibut) protein is Histone H2A.